We begin with the raw amino-acid sequence, 89 residues long: Small ribosomal subunit protein bS16c (89 aa).

Belongs to the bacterial ribosomal protein bS16 family.

It localises to the plastid. The protein localises to the chloroplast. This Morus indica (Mulberry) protein is Small ribosomal subunit protein bS16c.